A 243-amino-acid polypeptide reads, in one-letter code: Pyridoxine 5'-phosphate synthase (243 aa).

N9 lines the 3-amino-2-oxopropyl phosphate pocket. 11–12 is a 1-deoxy-D-xylulose 5-phosphate binding site; it reads DH. R20 contributes to the 3-amino-2-oxopropyl phosphate binding site. Residue H45 is the Proton acceptor of the active site. R47 and H52 together coordinate 1-deoxy-D-xylulose 5-phosphate. The Proton acceptor role is filled by E72. T102 provides a ligand contact to 1-deoxy-D-xylulose 5-phosphate. H193 functions as the Proton donor in the catalytic mechanism. 3-amino-2-oxopropyl phosphate is bound by residues G194 and 215 to 216; that span reads GH.

It belongs to the PNP synthase family. As to quaternary structure, homooctamer; tetramer of dimers.

It is found in the cytoplasm. It catalyses the reaction 3-amino-2-oxopropyl phosphate + 1-deoxy-D-xylulose 5-phosphate = pyridoxine 5'-phosphate + phosphate + 2 H2O + H(+). It participates in cofactor biosynthesis; pyridoxine 5'-phosphate biosynthesis; pyridoxine 5'-phosphate from D-erythrose 4-phosphate: step 5/5. Catalyzes the complicated ring closure reaction between the two acyclic compounds 1-deoxy-D-xylulose-5-phosphate (DXP) and 3-amino-2-oxopropyl phosphate (1-amino-acetone-3-phosphate or AAP) to form pyridoxine 5'-phosphate (PNP) and inorganic phosphate. The polypeptide is Pyridoxine 5'-phosphate synthase (Aliivibrio fischeri (strain ATCC 700601 / ES114) (Vibrio fischeri)).